Consider the following 131-residue polypeptide: Sulfurtransferase TusD (131 aa).

Cys81 (cysteine persulfide intermediate) is an active-site residue.

The protein belongs to the DsrE/TusD family. Heterohexamer, formed by a dimer of trimers. The hexameric TusBCD complex contains 2 copies each of TusB, TusC and TusD. The TusBCD complex interacts with TusE.

Its subcellular location is the cytoplasm. Functionally, part of a sulfur-relay system required for 2-thiolation of 5-methylaminomethyl-2-thiouridine (mnm(5)s(2)U) at tRNA wobble positions. Accepts sulfur from TusA and transfers it in turn to TusE. The protein is Sulfurtransferase TusD of Photorhabdus laumondii subsp. laumondii (strain DSM 15139 / CIP 105565 / TT01) (Photorhabdus luminescens subsp. laumondii).